The primary structure comprises 201 residues: Adapter protein MecA 1 (201 aa).

The protein belongs to the MecA family. Homodimer.

Its function is as follows. Enables the recognition and targeting of unfolded and aggregated proteins to the ClpC protease or to other proteins involved in proteolysis. Acts negatively in the development of competence by binding ComK and recruiting it to the ClpCP protease. When overexpressed, inhibits sporulation. Also involved in Spx degradation by ClpC. In Halalkalibacterium halodurans (strain ATCC BAA-125 / DSM 18197 / FERM 7344 / JCM 9153 / C-125) (Bacillus halodurans), this protein is Adapter protein MecA 1 (mecA1).